The chain runs to 396 residues: Ribosomal RNA large subunit methyltransferase I (396 aa).

One can recognise a PUA domain in the interval 2–79; the sequence is SVFIYLVKGR…KEETVDLDFF (78 aa).

It belongs to the methyltransferase superfamily. RlmI family.

It is found in the cytoplasm. The enzyme catalyses cytidine(1962) in 23S rRNA + S-adenosyl-L-methionine = 5-methylcytidine(1962) in 23S rRNA + S-adenosyl-L-homocysteine + H(+). Functionally, specifically methylates the cytosine at position 1962 (m5C1962) of 23S rRNA. This chain is Ribosomal RNA large subunit methyltransferase I, found in Aeromonas salmonicida (strain A449).